A 417-amino-acid chain; its full sequence is UDP-N-acetylglucosamine 1-carboxyvinyltransferase (417 aa).

Residue 22–23 participates in phosphoenolpyruvate binding; the sequence is KN. R93 contacts UDP-N-acetyl-alpha-D-glucosamine. The active-site Proton donor is the C117. C117 carries the post-translational modification 2-(S-cysteinyl)pyruvic acid O-phosphothioketal. UDP-N-acetyl-alpha-D-glucosamine-binding positions include 122 to 126, D305, and I327; that span reads RPVDQ.

This sequence belongs to the EPSP synthase family. MurA subfamily.

The protein localises to the cytoplasm. It carries out the reaction phosphoenolpyruvate + UDP-N-acetyl-alpha-D-glucosamine = UDP-N-acetyl-3-O-(1-carboxyvinyl)-alpha-D-glucosamine + phosphate. It participates in cell wall biogenesis; peptidoglycan biosynthesis. Cell wall formation. Adds enolpyruvyl to UDP-N-acetylglucosamine. This chain is UDP-N-acetylglucosamine 1-carboxyvinyltransferase, found in Dechloromonas aromatica (strain RCB).